The chain runs to 352 residues: Protein-glutamate methylesterase/protein-glutamine glutaminase (352 aa).

The region spanning 5–122 is the Response regulatory domain; that stretch reads RAIVIDDSAF…SLDIRNVEDE (118 aa). D56 is modified (4-aspartylphosphate). The 190-residue stretch at 163 to 352 folds into the CheB-type methylesterase domain; that stretch reads RSIVSIGTST…IPSLIVKQLT (190 aa). Active-site residues include S171, H198, and D294.

It belongs to the CheB family. In terms of processing, phosphorylated by CheA. Phosphorylation of the N-terminal regulatory domain activates the methylesterase activity.

The protein resides in the cytoplasm. It carries out the reaction [protein]-L-glutamate 5-O-methyl ester + H2O = L-glutamyl-[protein] + methanol + H(+). It catalyses the reaction L-glutaminyl-[protein] + H2O = L-glutamyl-[protein] + NH4(+). In terms of biological role, involved in chemotaxis. Part of a chemotaxis signal transduction system that modulates chemotaxis in response to various stimuli. Catalyzes the demethylation of specific methylglutamate residues introduced into the chemoreceptors (methyl-accepting chemotaxis proteins or MCP) by CheR. Also mediates the irreversible deamidation of specific glutamine residues to glutamic acid. This chain is Protein-glutamate methylesterase/protein-glutamine glutaminase, found in Oceanobacillus iheyensis (strain DSM 14371 / CIP 107618 / JCM 11309 / KCTC 3954 / HTE831).